An 868-amino-acid polypeptide reads, in one-letter code: Lysosomal cholesterol signaling protein (868 aa).

The Lumenal portion of the chain corresponds to 1–36 (MDSYFSAKNSTLAGDMNATWPASHGFNATGDPPSMS). Residues 1–368 (MDSYFSAKNS…SAWLLTFPTM (368 aa)) form a PIN-like transporter region. Asn-9, Asn-17, and Asn-27 each carry an N-linked (GlcNAc...) asparagine glycan. The chain crosses the membrane as a helical span at residues 37–57 (ITRLFPALLECFGIVLCGYIA). Positions 41 and 55 each coordinate cholesterol. Over 58 to 77 (GRANIITSTQAKGLGNFVSR) the chain is Cytoplasmic. A helical transmembrane segment spans residues 78–98 (FALPALLFKNMVVLNFSNVDW). Topologically, residues 99 to 102 (AFLY) are lumenal. Residues 103 to 123 (SVLIGKASVFFIVCVLTLLVA) traverse the membrane as a helical segment. Residues 124–131 (SPESRFSK) lie on the Cytoplasmic side of the membrane. Residues 132–152 (AGLFPIFATQSNDFALGYPIV) form a discontinuously helical membrane-spanning segment. Topologically, residues 153-165 (EALYQSTYPEYLQ) are lumenal. A helical transmembrane segment spans residues 166–186 (YIYLVAPISLMMLNPIGFIFC). Residues 187-211 (EIQKSKDTQNASQNKAKIVGLGFLR) lie on the Cytoplasmic side of the membrane. A discontinuously helical membrane pass occupies residues 212 to 232 (VLQNPIVFMVFVGIAFNFILD). At 233–241 (KKIPVYMEN) the chain is on the lumenal side. The chain crosses the membrane as a discontinuously helical span at residues 242 to 262 (FLDGLANSFSGSALFYLGLTM). The Cytoplasmic segment spans residues 263–271 (VGKIRRLKK). Gly-264, Lys-265, and Ile-266 together coordinate cholesterol. A helical membrane pass occupies residues 272–292 (SAFVVLTLLITAKLLVLPLLC). The Lumenal portion of the chain corresponds to 293–313 (REMVELLDKGDSVVNHTSLSN). A glycan (N-linked (GlcNAc...) asparagine) is linked at Asn-307. The discontinuously helical transmembrane segment at 314-334 (YAFLYGVFPVAPGVAIFATQF) threads the bilayer. The Cytoplasmic segment spans residues 335 to 344 (NMEVEIITSG). The chain crosses the membrane as a helical span at residues 345–365 (MVISTFVSAPIMYVSAWLLTF). The Lumenal segment spans residues 366 to 379 (PTMDAKPLAYAIQN). The tract at residues 378–715 (QNVSFDISII…FGIFGLDKHL (338 aa)) is GPCR. Residue Asn-379 is glycosylated (N-linked (GlcNAc...) asparagine). A helical membrane pass occupies residues 380–400 (VSFDISIISLVSLIWSLSILL). Over 401–412 (LSKKYKQLPHML) the chain is Cytoplasmic. Residues 413 to 433 (TANLLIAQTIVCAGMMIWNFV) form a helical membrane-spanning segment. Residues 434–436 (KEK) are Lumenal-facing. The helical transmembrane segment at 437–457 (NFVGQILVFVLLYSSLYSTYL) threads the bilayer. Residues 458–478 (WTGLLAVSLFLLKKRESVQLP) lie on the Cytoplasmic side of the membrane. The helical transmembrane segment at 479–499 (VGIIIISGWGIPALLVGVLLI) threads the bilayer. At 500-518 (TGKHNGDSIDSAFFYGKEQ) the chain is on the lumenal side. A helical transmembrane segment spans residues 519 to 539 (MITTAVTLFCSILIAGVSLMC). The Cytoplasmic segment spans residues 540–658 (MNRTTQAGHY…GDPQLTRHVL (119 aa)). A disordered region spans residues 550–582 (EGFGQSQNHKPVEPGSTAFEENPAPTNEPELFP). Residue Arg-655 participates in cholesterol binding. The helical transmembrane segment at 659–679 (LCLLLIIGLFANLSSCLWWLF) threads the bilayer. Residues 680–689 (NHETGRLYVE) are Lumenal-facing. A helical transmembrane segment spans residues 690 to 710 (LQFFCAVFNFGQGFISFGIFG). At 711–868 (LDKHLIILPF…SSPPSVSPKT (158 aa)) the chain is on the cytoplasmic side. The DEP domain occupies 755–833 (YHRDLCIRNI…DEYLFYRFLQ (79 aa)). The tract at residues 836–868 (PEQSPPARTLRDHQEESYKEIGHSSPPSVSPKT) is disordered. Residues 844–857 (TLRDHQEESYKEIG) show a composition bias toward basic and acidic residues.

Homodimer; via the transporter region and DEP domain. Interacts with the GATOR1 complex; preventing interaction between GATOR1 and KICSTOR; interaction is disrupted upon cholesterol starvation. Widely expressed in adult tissues and during development. In brain, widely distributed in forebrain regions, while it shows a more restricted distribution in the midbrain and hindbrain regions. Expressed at highest level in the lateral part of striatum and hippocampus.

The protein localises to the lysosome membrane. In terms of biological role, cholesterol-binding protein that acts as a regulator of mTORC1 signaling pathway. Acts as a sensor of cholesterol to signal cholesterol sufficiency to mTORC1: in presence of cholesterol, binds cholesterol, leading to disruption of the interaction between the GATOR1 and KICSTOR complexes and promotion of mTORC1 signaling. Upon cholesterol starvation, GPR155/LYCHOS is unable to perturb the association between GATOR1 and KICSTOR, leading to mTORC1 signaling inhibition. Binds indole-3-acetic acid and may play a role in tryptophan metabolism. The sequence is that of Lysosomal cholesterol signaling protein from Mus musculus (Mouse).